We begin with the raw amino-acid sequence, 295 residues long: Energy-coupling factor transporter ATP-binding protein EcfA2 (295 aa).

The ABC transporter domain occupies 3–246 (ITFKQVDFTY…PAWLTAHQLG (244 aa)). 40 to 47 (GHTGSGKS) lines the ATP pocket.

The protein belongs to the ABC transporter superfamily. Energy-coupling factor EcfA family. In terms of assembly, forms a stable energy-coupling factor (ECF) transporter complex composed of 2 membrane-embedded substrate-binding proteins (S component), 2 ATP-binding proteins (A component) and 2 transmembrane proteins (T component).

The protein localises to the cell membrane. ATP-binding (A) component of a common energy-coupling factor (ECF) ABC-transporter complex. Unlike classic ABC transporters this ECF transporter provides the energy necessary to transport a number of different substrates. This is Energy-coupling factor transporter ATP-binding protein EcfA2 from Lactiplantibacillus plantarum (strain ATCC BAA-793 / NCIMB 8826 / WCFS1) (Lactobacillus plantarum).